The chain runs to 1909 residues: MVMEDEPREATIKPSYWLDACEDISCDLIDDLVSEFDPSSVAVNESTDENGVINDFFGGIDHILDSIKNGGGLPNNGVSDTNSQINEVTVTPQVIAKETVKENGLQKNGGKRDEFSKEEGDKDRKRARVCSYQSERSNLSGRGHVNNSREGDRFMNRKRTRNWDEAGNNKKKRECNNYRRDGRDREVRGYWERDKVGSNELVYRSGTWEADHERDVKKVSGGNRECDVKAEENKSKPEERKEKVVEEQARRYQLDVLEQAKAKNTIAFLETGAGKTLIAILLIKSVHKDLMSQNRKMLSVFLVPKVPLVYQQAEVIRNQTCFQVGHYCGEMGQDFWDSRRWQREFESKQVLVMTAQILLNILRHSIIRMETIDLLILDECHHAVKKHPYSLVMSEFYHTTPKDKRPAIFGMTASPVNLKGVSSQVDCAIKIRNLETKLDSTVCTIKDRKELEKHVPMPSEIVVEYDKAATMWSLHETIKQMIAAVEEAAQASSRKSKWQFMGARDAGAKDELRQVYGVSERTESDGAANLIHKLRAINYTLAELGQWCAYKVGQSFLSALQSDERVNFQVDVKFQESYLSEVVSLLQCELLEGAAAEKVAAEVGKPENGNAHDEMEEGELPDDPVVSGGEHVDEVIGAAVADGKVTPKVQSLIKLLLKYQHTADFRAIVFVERVVAALVLPKVFAELPSLSFIRCASMIGHNNSQEMKSSQMQDTISKFRDGHVTLLVATSVAEEGLDIRQCNVVMRFDLAKTVLAYIQSRGRARKPGSDYILMVERGNVSHAAFLRNARNSEETLRKEAIERTDLSHLKDTSRLISIDAVPGTVYKVEATGAMVSLNSAVGLVHFYCSQLPGDRYAILRPEFSMEKHEKPGGHTEYSCRLQLPCNAPFEILEGPVCSSMRLAQQAVCLAACKKLHEMGAFTDMLLPDKGSGQDAEKADQDDEGEPVPGTARHREFYPEGVADVLKGEWVSSGKEVCESSKLFHLYMYNVRCVDFGSSKDPFLSEVSEFAILFGNELDAEVLSMSMDLYVARAMITKASLAFKGSLDITENQLSSLKKFHVRLMSIVLDVDVEPSTTPWDPAKAYLFVPVTDNTSMEPIKGINWELVEKITKTTAWDNPLQRARPDVYLGTNERTLGGDRREYGFGKLRHNIVFGQKSHPTYGIRGAVASFDVVRASGLLPVRDAFEKEVEEDLSKGKLMMADGCMVAEDLIGKIVTAAHSGKRFYVDSICYDMSAETSFPRKEGYLGPLEYNTYADYYKQKYGVDLNCKQQPLIKGRGVSYCKNLLSPRFEQSGESETVLDKTYYVFLPPELCVVHPLSGSLIRGAQRLPSIMRRVESMLLAVQLKNLISYPIPTSKILEALTAASCQETFCYERAELLGDAYLKWVVSRFLFLKYPQKHEGQLTRMRQQMVSNMVLYQFALVKGLQSYIQADRFAPSRWSAPGVPPVFDEDTKDGGSSFFDEEQKPVSEENSDVFEDGEMEDGELEGDLSSYRVLSSKTLADVVEALIGVYYVEGGKIAANHLMKWIGIHVEDDPDEVDGTLKNVNVPESVLKSIDFVGLERALKYEFKEKGLLVEAITHASRPSSGVSCYQRLEFVGDAVLDHLITRHLFFTYTSLPPGRLTDLRAAAVNNENFARVAVKHKLHLYLRHGSSALEKQIREFVKEVQTESSKPGFNSFGLGDCKAPKVLGDIVESIAGAIFLDSGKDTTAAWKVFQPLLQPMVTPETLPMHPVRELQERCQQQAEGLEYKASRSGNTATVEVFIDGVQVGVAQNPQKKMAQKLAARNALAALKEKEIAESKEKHINNGNAGEDQGENENGNKKNGHQPFTRQTLNDICLRKNWPMPSYRCVKEGGPAHAKRFTFGVRVNTSDRGWTDECIGEPMPSVKKAKDSAAVLLLELLNKTFS.

The disordered stretch occupies residues 99 to 177 (TVKENGLQKN…NNKKKRECNN (79 aa)). The span at 110-124 (GKRDEFSKEEGDKDR) shows a compositional bias: basic and acidic residues. Over residues 131–146 (SYQSERSNLSGRGHVN) the composition is skewed to polar residues. Residues 147–177 (NSREGDRFMNRKRTRNWDEAGNNKKKRECNN) are compositionally biased toward basic and acidic residues. The Helicase ATP-binding domain occupies 256-433 (VLEQAKAKNT…QVDCAIKIRN (178 aa)). 269-276 (LETGAGKT) serves as a coordination point for ATP. Residues 378-381 (DECH) carry the DECH box motif. A Helicase C-terminal domain is found at 651–812 (SLIKLLLKYQ…RTDLSHLKDT (162 aa)). Positions 840–935 (AVGLVHFYCS…LPDKGSGQDA (96 aa)) constitute a Dicer dsRNA-binding fold domain. The tract at residues 929–952 (KGSGQDAEKADQDDEGEPVPGTAR) is disordered. The PAZ domain occupies 1189–1318 (EVEEDLSKGK…LPPELCVVHP (130 aa)). RNase III domains lie at 1342–1518 (LAVQ…VEGG) and 1559–1707 (FVGL…LDSG). Residues Glu1597, Asp1693, and Glu1696 each contribute to the Mg(2+) site. DRBM domains follow at residues 1733–1796 (HPVR…ALKE) and 1831–1906 (FTRQ…LLNK). The disordered stretch occupies residues 1801 to 1831 (ESKEKHINNGNAGEDQGENENGNKKNGHQPF).

The protein belongs to the helicase family. Dicer subfamily. Interacts (via N-terminus) with DDL. Interacts (via DRBM domains) with DRB1, DRB2 and DRB5. May interact with AGO1 or AGO10 through their common PAZ domains. Requires Mg(2+) as cofactor. Mn(2+) is required as a cofactor. Highly expressed in flowers and seeds and detected in leaves and stems. Found in ovule integuments, inflorescence and floral meristems, stigma of flowers until just before pollination, vasculature of the funiculus, and embryo.

The protein resides in the nucleus. Its function is as follows. Ribonuclease (RNase) III involved in RNA-mediated post-transcriptional gene silencing (PTGS). Functions in the microRNAs (miRNAs) biogenesis pathway by cleaving primary miRNAs (pri-miRNAs) and precursor miRNAs (pre-miRNAs). Functions with DRB1/HYL1 and SERRATE proteins for accurate pri-miRNAs to miRNAs processing. Indirectly involved in the production of trans-acting small interfering RNAs (ta-siRNAs) derived from the TAS1, TAS2 or TAS3 endogenous transcripts by participating in the production of their initiating miRNAs. Involved in the processing of natural siRNAs (nat-siRNAs, derived from cis-natural antisense transcripts) by cleaving 24 nucleotide nat-siRNAs into 21 nucleotide nat-siRNAs. Can produce RDR6-dependent endogenous ta-siRNAs derived from TAS1 and TAS2. Required for the production of 30-40 nucleotide bacterial-induced long siRNAs (lsiRNA). Acts redundantly with DICER-LIKE 3 (DCL3) to promote flowering via repression of FLOWERING LOCUS C (FLC). Represses antiviral RNA silencing through negative regulation of the expression of DCL4 and DCL3. This chain is Endoribonuclease Dicer homolog 1 (DCL1), found in Arabidopsis thaliana (Mouse-ear cress).